The sequence spans 848 residues: ATP-dependent Clp protease ATP-binding subunit ClpC1 (848 aa).

The 143-residue stretch at 2–144 (FERFTDRARK…RQQVIQLLSG (143 aa)) folds into the Clp R domain. 2 repeat regions span residues 5-70 (FTDR…IGQG) and 80-144 (FTPR…LLSG). Residues 171 to 418 (LDQFGRNLTA…RMRIRRMTAP (248 aa)) are i. Residue 216 to 223 (GEPGVGKT) participates in ATP binding. The 36-residue stretch at 425 to 460 (DEKIAEARREKESAIDAQDFEKAASLRDREKTLVAQ) folds into the UVR domain. The segment at 479-670 (VDDEQIAEVL…VLIFTSNLGT (192 aa)) is II. An ATP-binding site is contributed by 553-560 (GPSGVGKT). Residues 821–848 (TGTRKPPAEPDLAKAGAHSAGGPEPAAR) form a disordered region.

It belongs to the ClpA/ClpB family. ClpC subfamily.

In terms of biological role, ATP-dependent specificity component of the Clp protease. It directs the protease to specific substrates. Can perform chaperone functions in the absence of ClpP. The sequence is that of ATP-dependent Clp protease ATP-binding subunit ClpC1 (clpC1) from Mycobacterium tuberculosis (strain CDC 1551 / Oshkosh).